A 359-amino-acid chain; its full sequence is MARSDVLIFVSTLLLFLSLLTVADAELVKSDKFPVVVSTWPFLEAVRAAWRAVDNGSSAVEAVVEGCSACEELRCDGTVGPGGSPDENGETMIDALVMDGVTMEVGAVAAMRYVKDGIRAAHLVMKYSQHTLLAGEGASAFAISMGLPGPMNLSSPESVKKWSDWKENQCQPNFRKNVVPANDCGPYKPNNSAMNVFVDKSTESCEMGAIEYKPPLVGPHNHDTISMAVIDRMGHIAVGTSTNGATYKIPGRVGDGPIVGSSAYADDEVGGCGATGDGDTMMRFLPCYQVVESMRQGMKPEEAAKDAISRIARKFPDFVGAVVAVDKNGSHAGACYGWTFQYSVQNPDMNDVQVFTVLP.

Residue threonine 224 is the Nucleophile of the active site. Residues 252-255 (RVGD) and 275-278 (TGDG) each bind substrate.

The protein belongs to the Ntn-hydrolase family. In terms of assembly, heterotetramer of two alpha and two beta chains arranged as a dimer of alpha/beta heterodimers. Post-translationally, cleaved into an alpha and beta chain by autocatalysis; this activates the enzyme. The N-terminal residue of the beta subunit is responsible for the nucleophile hydrolase activity.

The catalysed reaction is Cleavage of a beta-linked Asp residue from the N-terminus of a polypeptide.. Functionally, acts in asparagine catabolism but also in the final steps of protein degradation via hydrolysis of a range of isoaspartyl dipeptides. This chain is Probable isoaspartyl peptidase/L-asparaginase 3, found in Arabidopsis thaliana (Mouse-ear cress).